We begin with the raw amino-acid sequence, 243 residues long: MSLITVENLSVRYGANTVLRNVALTVEPGEIVTIVGPNGSGKTSLLKAIIGAARPAAGQVTLRPGLRIGYVPQRLHIDATLPITVERFMGLTARVTREDCMAALKIAAVPDLLKRQMSQLSGGQFQRVLLARALINKPDVLLLDEATQGLDQPGSAAFYRQIEDVRRETGCAVLMISHELHVVMSASDRVICLNGHVCCAGTPAVVASAPEYRALFGTGTGGALALYRHDHDHNHDHDHEAAE.

The ABC transporter domain maps to 4–219 (ITVENLSVRY…PEYRALFGTG (216 aa)). 36 to 43 (GPNGSGKT) lines the ATP pocket.

This sequence belongs to the ABC transporter superfamily. Zinc importer (TC 3.A.1.15.5) family. As to quaternary structure, the complex is composed of two ATP-binding proteins (ZnuC), two transmembrane proteins (ZnuB) and a solute-binding protein (ZnuA).

It localises to the cell inner membrane. The enzyme catalyses Zn(2+)(out) + ATP(in) + H2O(in) = Zn(2+)(in) + ADP(in) + phosphate(in) + H(+)(in). Part of the ABC transporter complex ZnuABC involved in zinc import. Responsible for energy coupling to the transport system. The chain is Zinc import ATP-binding protein ZnuC from Jannaschia sp. (strain CCS1).